Reading from the N-terminus, the 271-residue chain is Cyclic AMP-dependent transcription factor ATF-1 (271 aa).

The tract at residues 1–61 (MEDSHKSTTS…QKAHGILARR (61 aa)) is disordered. In terms of domain architecture, KID spans 31-90 (QVSSLSESEESQDSSDSIGSSQKAHGILARRPSYRKILKDLSSEDTRGRKGDGENSGVSA). Ser63 is subject to Phosphoserine; by CaMK1, CDK3, RPS6KA4 and RPS6KA5. Ser198 bears the Phosphoserine; by HIPK2 mark. Residues Lys208 and Lys215 each participate in a glycyl lysine isopeptide (Lys-Gly) (interchain with G-Cter in SUMO2) cross-link. Positions 213–271 (QLKREIRLMKNREAARECRRKKKEYVKCLENRVAVLENQNKTLIEELKTLKDLYSNKSV) constitute a bZIP domain. Residues 215–239 (KREIRLMKNREAARECRRKKKEYVK) are basic motif. The segment at 241-262 (LENRVAVLENQNKTLIEELKTL) is leucine-zipper.

This sequence belongs to the bZIP family. ATF subfamily. In terms of assembly, binds DNA as a dimer. Interacts with HIPK2 and CDK3. Interacts with MOTS-c, a peptide produced by the mitochondrially encoded 12S rRNA MT-RNR1; the interaction occurs in the nucleus following metabolic stress. In terms of processing, phosphorylated at Ser-198 by HIPK2 in response to genotoxic stress. This phosphorylation promotes transcription repression of FTH1 and other antioxidant detoxification genes. The CDK3-mediated phosphorylation at Ser-63 promotes its transactivation and transcriptional activities. Phosphorylated at Ser-63 by RPS6KA4 and RPS6KA5 in response to mitogenic or stress stimuli.

The protein localises to the nucleus. Functionally, this protein binds the cAMP response element (CRE) (consensus: 5'-GTGACGT[AC][AG]-3'), a sequence present in many viral and cellular promoters. Binds to the Tax-responsive element (TRE) of HTLV-I. Mediates PKA-induced stimulation of CRE-reporter genes. Represses the expression of FTH1 and other antioxidant detoxification genes. Triggers cell proliferation and transformation. In Homo sapiens (Human), this protein is Cyclic AMP-dependent transcription factor ATF-1 (ATF1).